The primary structure comprises 598 residues: Aspartate--tRNA(Asp/Asn) ligase (598 aa).

Glu177 is a binding site for L-aspartate. Positions Gln201 to Lys204 are aspartate. An L-aspartate-binding site is contributed by Arg223. Residues Arg223–Glu225 and Gln232 each bind ATP. L-aspartate is bound at residue His456. Glu493 contributes to the ATP binding site. Arg500 lines the L-aspartate pocket. An ATP-binding site is contributed by Gly545–Arg548.

The protein belongs to the class-II aminoacyl-tRNA synthetase family. Type 1 subfamily. Homodimer.

Its subcellular location is the cytoplasm. It catalyses the reaction tRNA(Asx) + L-aspartate + ATP = L-aspartyl-tRNA(Asx) + AMP + diphosphate. Aspartyl-tRNA synthetase with relaxed tRNA specificity since it is able to aspartylate not only its cognate tRNA(Asp) but also tRNA(Asn). Reaction proceeds in two steps: L-aspartate is first activated by ATP to form Asp-AMP and then transferred to the acceptor end of tRNA(Asp/Asn). The sequence is that of Aspartate--tRNA(Asp/Asn) ligase from Prochlorococcus marinus (strain MIT 9215).